A 458-amino-acid chain; its full sequence is Monomethylamine methyltransferase MtmB2 (458 aa).

Position 202 (O202) is a non-standard amino acid, pyrrolysine.

Belongs to the monomethylamine methyltransferase family. Can form a complex with MtmC (MtmC1 or MtmC2).

The catalysed reaction is Co(I)-[methylamine-specific corrinoid protein] + methylamine + H(+) = methyl-Co(III)-[methylamine-specific corrinoid protein] + NH4(+). It participates in one-carbon metabolism; methanogenesis from methylamine. Functionally, catalyzes the transfer of the methyl group from monomethylamine to the corrinoid cofactor of MtmC (MtmC1 or MtmC2). The chain is Monomethylamine methyltransferase MtmB2 (mtmB2) from Methanosarcina barkeri.